The primary structure comprises 304 residues: Sulfate adenylyltransferase subunit 2 (304 aa).

Belongs to the PAPS reductase family. CysD subfamily. Heterodimer composed of CysD, the smaller subunit, and CysN.

It catalyses the reaction sulfate + ATP + H(+) = adenosine 5'-phosphosulfate + diphosphate. It participates in sulfur metabolism; hydrogen sulfide biosynthesis; sulfite from sulfate: step 1/3. With CysN forms the ATP sulfurylase (ATPS) that catalyzes the adenylation of sulfate producing adenosine 5'-phosphosulfate (APS) and diphosphate, the first enzymatic step in sulfur assimilation pathway. APS synthesis involves the formation of a high-energy phosphoric-sulfuric acid anhydride bond driven by GTP hydrolysis by CysN coupled to ATP hydrolysis by CysD. This is Sulfate adenylyltransferase subunit 2 from Acinetobacter baumannii (strain SDF).